Reading from the N-terminus, the 332-residue chain is Succinylglutamate desuccinylase (332 aa).

Positions 59, 62, and 151 each coordinate Zn(2+). Glu-215 is a catalytic residue.

The protein belongs to the AspA/AstE family. Succinylglutamate desuccinylase subfamily. Requires Zn(2+) as cofactor.

The catalysed reaction is N-succinyl-L-glutamate + H2O = L-glutamate + succinate. The protein operates within amino-acid degradation; L-arginine degradation via AST pathway; L-glutamate and succinate from L-arginine: step 5/5. In terms of biological role, transforms N(2)-succinylglutamate into succinate and glutamate. The chain is Succinylglutamate desuccinylase from Pseudomonas aeruginosa (strain UCBPP-PA14).